The sequence spans 519 residues: Exodeoxyribonuclease 7 large subunit (519 aa).

A disordered region spans residues 493 to 519 (AISTGKSSNTNRKSAPAREPGKQGSLF). Positions 496 to 505 (TGKSSNTNRK) are enriched in polar residues.

This sequence belongs to the XseA family. As to quaternary structure, heterooligomer composed of large and small subunits.

It is found in the cytoplasm. The catalysed reaction is Exonucleolytic cleavage in either 5'- to 3'- or 3'- to 5'-direction to yield nucleoside 5'-phosphates.. Bidirectionally degrades single-stranded DNA into large acid-insoluble oligonucleotides, which are then degraded further into small acid-soluble oligonucleotides. The protein is Exodeoxyribonuclease 7 large subunit of Chelativorans sp. (strain BNC1).